The chain runs to 216 residues: Pyridoxine/pyridoxamine 5'-phosphate oxidase (216 aa).

Substrate contacts are provided by residues 12 to 15 (RREY) and Lys70. Residues 65 to 70 (RLVLLK), 80 to 81 (YT), Arg86, Lys87, and Gln109 contribute to the FMN site. Tyr127, Arg131, and Ser135 together coordinate substrate. FMN contacts are provided by residues 144 to 145 (QS) and Trp189. Residue 195–197 (RLH) coordinates substrate. Position 199 (Arg199) interacts with FMN.

It belongs to the pyridoxamine 5'-phosphate oxidase family. Homodimer. Requires FMN as cofactor.

It catalyses the reaction pyridoxamine 5'-phosphate + O2 + H2O = pyridoxal 5'-phosphate + H2O2 + NH4(+). The enzyme catalyses pyridoxine 5'-phosphate + O2 = pyridoxal 5'-phosphate + H2O2. It functions in the pathway cofactor metabolism; pyridoxal 5'-phosphate salvage; pyridoxal 5'-phosphate from pyridoxamine 5'-phosphate: step 1/1. Its pathway is cofactor metabolism; pyridoxal 5'-phosphate salvage; pyridoxal 5'-phosphate from pyridoxine 5'-phosphate: step 1/1. In terms of biological role, catalyzes the oxidation of either pyridoxine 5'-phosphate (PNP) or pyridoxamine 5'-phosphate (PMP) into pyridoxal 5'-phosphate (PLP). The sequence is that of Pyridoxine/pyridoxamine 5'-phosphate oxidase from Baumannia cicadellinicola subsp. Homalodisca coagulata.